Consider the following 70-residue polypeptide: Large ribosomal subunit protein bL31 (70 aa).

C16, C18, C37, and C40 together coordinate Zn(2+).

Belongs to the bacterial ribosomal protein bL31 family. Type A subfamily. As to quaternary structure, part of the 50S ribosomal subunit. Zn(2+) is required as a cofactor.

Its function is as follows. Binds the 23S rRNA. The polypeptide is Large ribosomal subunit protein bL31 (Shewanella denitrificans (strain OS217 / ATCC BAA-1090 / DSM 15013)).